Reading from the N-terminus, the 870-residue chain is Protein translocase subunit SecA (870 aa).

ATP is bound by residues Q86, 104 to 108 (GEGKT), and D499. Zn(2+) contacts are provided by C854, C856, C865, and H866.

It belongs to the SecA family. In terms of assembly, monomer and homodimer. Part of the essential Sec protein translocation apparatus which comprises SecA, SecYEG and auxiliary proteins SecDF-YajC and YidC. The cofactor is Zn(2+).

Its subcellular location is the cell inner membrane. The protein localises to the cytoplasm. It catalyses the reaction ATP + H2O + cellular proteinSide 1 = ADP + phosphate + cellular proteinSide 2.. Its function is as follows. Part of the Sec protein translocase complex. Interacts with the SecYEG preprotein conducting channel. Has a central role in coupling the hydrolysis of ATP to the transfer of proteins into and across the cell membrane, serving both as a receptor for the preprotein-SecB complex and as an ATP-driven molecular motor driving the stepwise translocation of polypeptide chains across the membrane. The protein is Protein translocase subunit SecA of Ehrlichia ruminantium (strain Welgevonden).